A 513-amino-acid chain; its full sequence is Zinc finger CCCH-type with G patch domain-containing protein (513 aa).

Residues 155–178 (PCSYYLEGECRFDETKCRFSHGAL) form a C3H1-type zinc finger. Acidic residues-rich tracts occupy residues 252-261 (DQDEDDELSS) and 271-283 (DSSD…MDDL). The interval 252–283 (DQDEDDELSSEESNSSMNDDSSDEAESDMDDL) is disordered. The G-patch domain occupies 312 to 358 (TRGIGSKLMEKMGYIHGTGLGSDGRGIVTPVSAQILPQGRSLDACME). Over residues 455-467 (DMAKVKQSLDRNS) the composition is skewed to basic and acidic residues. The disordered stretch occupies residues 455 to 513 (DMAKVKQSLDRNSGDAQLQKRLQVQMESHKQELATLQAQERSLSKEQQTRKSKNKMFEF). Residues 468–480 (GDAQLQKRLQVQM) are compositionally biased toward polar residues. Over residues 496–513 (SLSKEQQTRKSKNKMFEF) the composition is skewed to basic and acidic residues.

The protein localises to the nucleus. In terms of biological role, transcription repressor. This is Zinc finger CCCH-type with G patch domain-containing protein from Drosophila yakuba (Fruit fly).